The following is a 147-amino-acid chain: MELILKQDVQNLGFKDDIVSVKAGYGRNYLIPQGFAHMATSSAKKVLAENLKQRAHKEAKVVADAKTLGDALKAIEIKISAKAGGEKLFGSITNIDIAEALAKGGQSIDRKFITSGIVKRTGKYNASVRLHRDVIVELAYEIVAEQA.

Belongs to the bacterial ribosomal protein bL9 family.

Functionally, binds to the 23S rRNA. This chain is Large ribosomal subunit protein bL9, found in Flavobacterium psychrophilum (strain ATCC 49511 / DSM 21280 / CIP 103535 / JIP02/86).